Here is a 157-residue protein sequence, read N- to C-terminus: MKILGIDPGSRNCGYAIIEKNVRKTALIEAGLIKIKPNTLQYQITELCEGLDVIFKNHKFDEVAIEDIFFAYNPKTVLKLAQFRGALSLKILQLHGDFAEYTPLQVKKAVTGKAKAQKEQVAFMVKKILGITKEIKPLDITDAIAVALTHANNLCLR.

Catalysis depends on residues D7, E66, and D139. Mg(2+) contacts are provided by D7, E66, and D139.

The protein belongs to the RuvC family. Homodimer which binds Holliday junction (HJ) DNA. The HJ becomes 2-fold symmetrical on binding to RuvC with unstacked arms; it has a different conformation from HJ DNA in complex with RuvA. In the full resolvosome a probable DNA-RuvA(4)-RuvB(12)-RuvC(2) complex forms which resolves the HJ. Mg(2+) serves as cofactor.

Its subcellular location is the cytoplasm. It carries out the reaction Endonucleolytic cleavage at a junction such as a reciprocal single-stranded crossover between two homologous DNA duplexes (Holliday junction).. Functionally, the RuvA-RuvB-RuvC complex processes Holliday junction (HJ) DNA during genetic recombination and DNA repair. Endonuclease that resolves HJ intermediates. Cleaves cruciform DNA by making single-stranded nicks across the HJ at symmetrical positions within the homologous arms, yielding a 5'-phosphate and a 3'-hydroxyl group; requires a central core of homology in the junction. The consensus cleavage sequence is 5'-(A/T)TT(C/G)-3'. Cleavage occurs on the 3'-side of the TT dinucleotide at the point of strand exchange. HJ branch migration catalyzed by RuvA-RuvB allows RuvC to scan DNA until it finds its consensus sequence, where it cleaves and resolves the cruciform DNA. This is Crossover junction endodeoxyribonuclease RuvC from Campylobacter curvus (strain 525.92).